The sequence spans 506 residues: NAD(P)H-quinone oxidoreductase subunit 2 (506 aa).

Transmembrane regions (helical) follow at residues 14-34 (AIIP…VDLA), 42-62 (WAPI…ALQW), 79-99 (LAIA…LISW), 108-128 (PIGE…LLCG), 132-152 (LISI…LSGY), 167-187 (LLVG…LYGL), 206-226 (FITS…IAAV), 240-260 (PTPV…AFAI), 276-296 (LLFT…ALAQ), 302-322 (MLAY…VSGT), 330-350 (VLYL…VILF), 374-394 (LGLS…GFFG), and 409-429 (LLVI…ISVI).

It belongs to the complex I subunit 2 family. NDH-1 can be composed of about 15 different subunits; different subcomplexes with different compositions have been identified which probably have different functions.

The protein resides in the cellular thylakoid membrane. The enzyme catalyses a plastoquinone + NADH + (n+1) H(+)(in) = a plastoquinol + NAD(+) + n H(+)(out). The catalysed reaction is a plastoquinone + NADPH + (n+1) H(+)(in) = a plastoquinol + NADP(+) + n H(+)(out). Its function is as follows. NDH-1 shuttles electrons from an unknown electron donor, via FMN and iron-sulfur (Fe-S) centers, to quinones in the respiratory and/or the photosynthetic chain. The immediate electron acceptor for the enzyme in this species is believed to be plastoquinone. Couples the redox reaction to proton translocation, and thus conserves the redox energy in a proton gradient. Cyanobacterial NDH-1 also plays a role in inorganic carbon-concentration. The polypeptide is NAD(P)H-quinone oxidoreductase subunit 2 (Prochlorococcus marinus (strain MIT 9312)).